Consider the following 413-residue polypeptide: L-cysteine:1D-myo-inositol 2-amino-2-deoxy-alpha-D-glucopyranoside ligase (413 aa).

Cysteine 43 serves as a coordination point for Zn(2+). Residues 43–46, threonine 58, and 81–83 contribute to the L-cysteinyl-5'-AMP site; these read CGIT and NIT. Positions 45-55 match the 'HIGH' region motif; that stretch reads ITPYDATHLGH. The short motif at 187–192 is the 'ERGGDP' region element; it reads ERGGDP. L-cysteinyl-5'-AMP is bound at residue tryptophan 227. Cysteine 231 lines the Zn(2+) pocket. 249-251 lines the L-cysteinyl-5'-AMP pocket; the sequence is GND. Residue histidine 256 coordinates Zn(2+). An L-cysteinyl-5'-AMP-binding site is contributed by valine 283. The 'KMSKS' region signature appears at 289 to 293; sequence KMSKS.

This sequence belongs to the class-I aminoacyl-tRNA synthetase family. MshC subfamily. As to quaternary structure, monomer. The cofactor is Zn(2+).

The enzyme catalyses 1D-myo-inositol 2-amino-2-deoxy-alpha-D-glucopyranoside + L-cysteine + ATP = 1D-myo-inositol 2-(L-cysteinylamino)-2-deoxy-alpha-D-glucopyranoside + AMP + diphosphate + H(+). Catalyzes the ATP-dependent condensation of GlcN-Ins and L-cysteine to form L-Cys-GlcN-Ins. This Gordonia bronchialis (strain ATCC 25592 / DSM 43247 / BCRC 13721 / JCM 3198 / KCTC 3076 / NBRC 16047 / NCTC 10667) (Rhodococcus bronchialis) protein is L-cysteine:1D-myo-inositol 2-amino-2-deoxy-alpha-D-glucopyranoside ligase.